The primary structure comprises 358 residues: Phospho-N-acetylmuramoyl-pentapeptide-transferase (358 aa).

A run of 10 helical transmembrane segments spans residues threonine 26–arginine 46, threonine 71–alanine 91, leucine 93–phenylalanine 113, methionine 134–phenylalanine 154, leucine 170–asparagine 190, glycine 197–alanine 217, alanine 234–phenylalanine 254, valine 261–leucine 281, isoleucine 286–valine 306, and lysine 335–leucine 355.

The protein belongs to the glycosyltransferase 4 family. MraY subfamily. Requires Mg(2+) as cofactor.

The protein localises to the cell inner membrane. It catalyses the reaction UDP-N-acetyl-alpha-D-muramoyl-L-alanyl-gamma-D-glutamyl-meso-2,6-diaminopimeloyl-D-alanyl-D-alanine + di-trans,octa-cis-undecaprenyl phosphate = di-trans,octa-cis-undecaprenyl diphospho-N-acetyl-alpha-D-muramoyl-L-alanyl-D-glutamyl-meso-2,6-diaminopimeloyl-D-alanyl-D-alanine + UMP. The protein operates within cell wall biogenesis; peptidoglycan biosynthesis. Functionally, catalyzes the initial step of the lipid cycle reactions in the biosynthesis of the cell wall peptidoglycan: transfers peptidoglycan precursor phospho-MurNAc-pentapeptide from UDP-MurNAc-pentapeptide onto the lipid carrier undecaprenyl phosphate, yielding undecaprenyl-pyrophosphoryl-MurNAc-pentapeptide, known as lipid I. This Trichlorobacter lovleyi (strain ATCC BAA-1151 / DSM 17278 / SZ) (Geobacter lovleyi) protein is Phospho-N-acetylmuramoyl-pentapeptide-transferase.